We begin with the raw amino-acid sequence, 38 residues long: Zinc-containing ferredoxin (38 aa).

A compositionally biased stretch (polar residues) spans 1–11; the sequence is GIDPNFRTSRP. The disordered stretch occupies residues 1 to 38; it reads GIDPNFRTSRPVTGDHAGHKVYAPADPPVKEKALGIHG. An N-terminal extension region spans residues 1–38; sequence GIDPNFRTSRPVTGDHAGHKVYAPADPPVKEKALGIHG. Zn(2+) contacts are provided by His16 and His19. The span at 28 to 38 shows a compositional bias: basic and acidic residues; that stretch reads PVKEKALGIHG. Position 30 is an N6-methyllysine (Lys30). Residue His37 participates in Zn(2+) binding.

It depends on [3Fe-4S] cluster as a cofactor. [4Fe-4S] cluster serves as cofactor. Requires Zn(2+) as cofactor.

In terms of biological role, ferredoxins are iron-sulfur proteins that transfer electrons in a wide variety of metabolic reactions. This chain is Zinc-containing ferredoxin (zfx), found in Metallosphaera prunae.